The chain runs to 347 residues: DNA-directed RNA polymerase subunit alpha (347 aa).

The segment at 1 to 243 is alpha N-terminal domain (alpha-NTD); it reads MLIKQGDRLI…DQISVFINFD (243 aa). The interval 260-347 is alpha C-terminal domain (alpha-CTD); that stretch reads FNEHLFKSID…EWKRKQQHEA (88 aa).

It belongs to the RNA polymerase alpha chain family. In terms of assembly, homodimer. The RNAP catalytic core consists of 2 alpha, 1 beta, 1 beta' and 1 omega subunit. When a sigma factor is associated with the core the holoenzyme is formed, which can initiate transcription.

It catalyses the reaction RNA(n) + a ribonucleoside 5'-triphosphate = RNA(n+1) + diphosphate. Its function is as follows. DNA-dependent RNA polymerase catalyzes the transcription of DNA into RNA using the four ribonucleoside triphosphates as substrates. In Nitratidesulfovibrio vulgaris (strain ATCC 29579 / DSM 644 / CCUG 34227 / NCIMB 8303 / VKM B-1760 / Hildenborough) (Desulfovibrio vulgaris), this protein is DNA-directed RNA polymerase subunit alpha.